A 218-amino-acid polypeptide reads, in one-letter code: Small ribosomal subunit protein uS3 (218 aa).

Residues Ile38 to Lys106 enclose the KH type-2 domain.

Belongs to the universal ribosomal protein uS3 family. Part of the 30S ribosomal subunit. Forms a tight complex with proteins S10 and S14.

Its function is as follows. Binds the lower part of the 30S subunit head. Binds mRNA in the 70S ribosome, positioning it for translation. The polypeptide is Small ribosomal subunit protein uS3 (Anoxybacillus flavithermus (strain DSM 21510 / WK1)).